Consider the following 182-residue polypeptide: ATP-dependent protease subunit HslV (182 aa).

Residue threonine 2 is part of the active site. Na(+)-binding residues include glycine 157, cysteine 160, and threonine 163.

This sequence belongs to the peptidase T1B family. HslV subfamily. As to quaternary structure, a double ring-shaped homohexamer of HslV is capped on each side by a ring-shaped HslU homohexamer. The assembly of the HslU/HslV complex is dependent on binding of ATP.

It localises to the cytoplasm. The enzyme catalyses ATP-dependent cleavage of peptide bonds with broad specificity.. With respect to regulation, allosterically activated by HslU binding. Functionally, protease subunit of a proteasome-like degradation complex believed to be a general protein degrading machinery. This Sodalis glossinidius (strain morsitans) protein is ATP-dependent protease subunit HslV.